A 271-amino-acid polypeptide reads, in one-letter code: Aquaporin-2 (271 aa).

The Cytoplasmic portion of the chain corresponds to 1–11; the sequence is MWELRSIAFSR. The chain crosses the membrane as a helical span at residues 12-32; it reads AVLAEFLATLLFVFFGLGSAL. Residues 33–40 lie on the Extracellular side of the membrane; it reads NWPQALPS. Residues 41-59 traverse the membrane as a helical segment; it reads VLQIAMAFGLAIGTLVQAL. The Cytoplasmic segment spans residues 60–64; sequence GHVSG. An intramembrane region (discontinuously helical) is located at residues 65–74; that stretch reads AHINPAVTVA. An NPA 1 motif is present at residues 68 to 70; the sequence is NPA. At 75–85 the chain is on the cytoplasmic side; the sequence is CLVGCHVSFLR. A helical transmembrane segment spans residues 86–107; it reads AVFYVAAQLLGAVAGAALLHEI. At 108–127 the chain is on the extracellular side; the sequence is TPPAIRGDLAVNALNNNSTA. N123 is a glycosylation site (N-linked (GlcNAc...) asparagine). Residues 128 to 148 form a helical membrane-spanning segment; it reads GQAVTVELFLTLQLVLCIFAS. Over 149–156 the chain is Cytoplasmic; sequence TDERRGDN. The helical transmembrane segment at 157-176 threads the bilayer; it reads VGTPALSIGFSVALGHLLGI. Residues 177–180 are Extracellular-facing; the sequence is HYTG. Positions 181–193 form an intramembrane region, discontinuously helical; that stretch reads CSMNPARSLAPAI. The short motif at 184 to 186 is the NPA 2 element; that stretch reads NPA. Residues 194-201 lie on the Extracellular side of the membrane; the sequence is VTGKFDDH. A helical membrane pass occupies residues 202–222; it reads WVFWIGPLVGAIVASLLYNYV. Over 223-271 the chain is Cytoplasmic; the sequence is LFPPAKSLSERLAVLKGLEPDTDWEEREVRRRQSVELHSPQSLPRGSKA. A disordered region spans residues 251–271; sequence VRRRQSVELHSPQSLPRGSKA. Phosphoserine is present on S256. Residues 261-271 are compositionally biased toward polar residues; the sequence is SPQSLPRGSKA.

The protein belongs to the MIP/aquaporin (TC 1.A.8) family. Homotetramer. Ser-256 phosphorylation is necessary and sufficient for expression at the apical membrane. Endocytosis is not phosphorylation-dependent. Post-translationally, N-glycosylated.

It is found in the apical cell membrane. It localises to the basolateral cell membrane. The protein localises to the cell membrane. Its subcellular location is the cytoplasmic vesicle membrane. The protein resides in the golgi apparatus. It is found in the trans-Golgi network membrane. It catalyses the reaction H2O(in) = H2O(out). It carries out the reaction glycerol(in) = glycerol(out). In terms of biological role, forms a water-specific channel that provides the plasma membranes of renal collecting duct with high permeability to water, thereby permitting water to move in the direction of an osmotic gradient. Could also be permeable to glycerol. The sequence is that of Aquaporin-2 from Bos taurus (Bovine).